The sequence spans 320 residues: Serpentine receptor class delta-40 (320 aa).

7 consecutive transmembrane segments (helical) span residues I12–I32, M42–C62, Y95–F115, I133–I153, L189–F209, A243–T263, and F273–V293.

This sequence belongs to the nematode receptor-like protein srd family.

Its subcellular location is the membrane. This Caenorhabditis elegans protein is Serpentine receptor class delta-40 (srd-40).